Reading from the N-terminus, the 217-residue chain is Protein canopy 4 (217 aa).

Positions methionine 1–cysteine 27 are cleaved as a signal peptide. 3 cysteine pairs are disulfide-bonded: cysteine 27/cysteine 185, cysteine 30/cysteine 173, and cysteine 83/cysteine 145. A disordered region spans residues methionine 194–leucine 217. A compositionally biased stretch (basic and acidic residues) spans glycine 205–leucine 217.

Belongs to the canopy family.

The protein resides in the secreted. The protein is Protein canopy 4 (cnpy4) of Danio rerio (Zebrafish).